Consider the following 257-residue polypeptide: Hydroxyacylglutathione hydrolase (257 aa).

Residues His-53, His-55, Asp-57, His-58, His-109, Asp-126, and His-164 each contribute to the Zn(2+) site.

It belongs to the metallo-beta-lactamase superfamily. Glyoxalase II family. In terms of assembly, monomer. It depends on Zn(2+) as a cofactor.

It carries out the reaction an S-(2-hydroxyacyl)glutathione + H2O = a 2-hydroxy carboxylate + glutathione + H(+). The protein operates within secondary metabolite metabolism; methylglyoxal degradation; (R)-lactate from methylglyoxal: step 2/2. Functionally, thiolesterase that catalyzes the hydrolysis of S-D-lactoyl-glutathione to form glutathione and D-lactic acid. In Baumannia cicadellinicola subsp. Homalodisca coagulata, this protein is Hydroxyacylglutathione hydrolase.